Consider the following 274-residue polypeptide: Halorhodopsin (274 aa).

Residues 1–21 (MSITSVPGVVDAGVLGAQSAA) constitute a propeptide that is removed on maturation. The Extracellular segment spans residues 22–25 (AVRE). The helical transmembrane segment at 26–51 (NALLSSSLWVNVALAGIAILVFVYMG) threads the bilayer. At 52–57 (RTIRPG) the chain is on the cytoplasmic side. The chain crosses the membrane as a helical span at residues 58–81 (RPRLIWGATLMIPLVSISSYLGLL). The Extracellular portion of the chain corresponds to 82–105 (SGLTVGMIEMPAGHALAGEMVRSQ). 3 residues coordinate chloride: Q105, T111, and S115. A helical membrane pass occupies residues 106 to 127 (WGRYLTWALSTPMILLALGLLA). The Cytoplasmic segment spans residues 128–130 (DVD). The chain crosses the membrane as a helical span at residues 131–154 (LGSLFTVIAADIGMCVTGLAAAMT). Residues 155–157 (TSA) lie on the Extracellular side of the membrane. Residues 158–180 (LLFRWAFYAISCAFFVVVLSALV) traverse the membrane as a helical segment. Residues 181 to 192 (TDWAASASSAGT) are Cytoplasmic-facing. The chain crosses the membrane as a helical span at residues 193 to 216 (AEIFDTLRVLTVVLWLGYPIVWAV). Residues 217–226 (GVEGLALVQS) are Extracellular-facing. Residues 227–255 (VGVTSWAYSVLDVFAKYVFAFILLRWVAN) traverse the membrane as a helical segment. The residue at position 242 (K242) is an N6-(retinylidene)lysine. The Cytoplasmic portion of the chain corresponds to 256–274 (NERTVAVAGQTLGTMSSDD).

It belongs to the archaeal/bacterial/fungal opsin family. In terms of assembly, homotrimer.

It is found in the cell membrane. Its function is as follows. Light-driven chloride pump. The chain is Halorhodopsin (hop) from Halobacterium salinarum (strain ATCC 29341 / DSM 671 / R1).